The primary structure comprises 144 residues: MVALKTCSLLLVLLFLAVGLGEKEEVEFRSHAKFAGPRPRGPRYAEGTFISDYSIAMDKIRQQDFVNWLLAQRGKKSDWKHNITQREARALVLAGQSQGKEDKEAQESSLPKSLSDDDVLRDLLIQELLAWMVDQTELCRLRSQ.

An N-terminal signal peptide occupies residues 1 to 21 (MVALKTCSLLLVLLFLAVGLG). Propeptides lie at residues 22-42 (EKEE…PRGP) and 87-144 (EARA…LRSQ). The segment at 94 to 113 (AGQSQGKEDKEAQESSLPKS) is disordered.

Belongs to the glucagon family.

It localises to the secreted. Functionally, potent stimulator of insulin secretion and relatively poor inhibitor of gastric acid secretion. This chain is Gastric inhibitory polypeptide (Gip), found in Mus musculus (Mouse).